Here is an 859-residue protein sequence, read N- to C-terminus: Mycobactin import ATP-binding/permease protein IrtA (859 aa).

The Cytoplasmic segment spans residues 1-292 (MARGLQGVML…SRLLAPLKLP (292 aa)). Residues 15–122 (ARDHTATVIE…MSLMGSSRFD (108 aa)) enclose the FAD-binding FR-type domain. Residues 70 to 73 (RAYT), 87 to 91 (DVVLH), and 97 to 98 (AS) each bind FAD. The interval 247 to 267 (HRATEPAATEPEVGAAPQPES) is disordered. Residues 293–313 (LVLSGVLAALVTLAQLAPFVL) traverse the membrane as a helical segment. Positions 293 to 575 (LVLSGVLAAL…IAYGLGGLRT (283 aa)) constitute an ABC transmembrane type-1 domain. The Periplasmic portion of the chain corresponds to 314–334 (LVELSRLLVSGAGAHRLFTVG). The chain crosses the membrane as a helical span at residues 335-355 (FAAVGLLGTGALLAAALTLWL). The Cytoplasmic segment spans residues 356-408 (HVIDARFARALRLRLLSKLSRLPLGWFTSRGSGSIKKLVTDDTLALHYLVTHA). Residues 409-429 (VPDAVAAVVAPVGVLVYLFVV) form a helical membrane-spanning segment. Over 430–432 (DWR) the chain is Periplasmic. A helical membrane pass occupies residues 433–453 (VALVLFGPVLVYLTITSSLTI). Topologically, residues 454–519 (QSGPRIVQAQ…PLAGKKTLMD (66 aa)) are cytoplasmic. The helical transmembrane segment at 520–540 (LATRPATFLWLIAATGTLLVA) threads the bilayer. Over 541–548 (THRMDPVN) the chain is Periplasmic. Residues 549 to 569 (LLPFMFLGTTFGARLLGIAYG) form a helical membrane-spanning segment. Topologically, residues 570–859 (LGGLRTGLLA…AVAAAQDGTR (290 aa)) are cytoplasmic. Residues 610–843 (VVFDHVTFGY…GGRYCRLWDT (234 aa)) form the ABC transporter domain. 643 to 650 (GPSGSGKS) contributes to the ATP binding site.

Belongs to the ABC transporter superfamily. Siderophore-Fe(3+) uptake transporter (SIUT) (TC 3.A.1.21) family. In terms of assembly, forms a heterodimer with IrtB. FAD is required as a cofactor.

It is found in the cell inner membrane. Its function is as follows. Part of the ABC transporter complex IrtAB involved in the import of iron-bound mycobactin (Fe-MBT) and carboxymycobactin (Fe-cMBT). Mycobactins are then reduced by the siderophore interaction domain to facilitate iron release in the bacterial cell. Transmembrane domains (TMD) form a pore in the membrane and the ATP-binding domain (NBD) is responsible for energy generation. Required for replication in human macrophages and in mouse lungs. This Mycobacterium tuberculosis (strain ATCC 25618 / H37Rv) protein is Mycobactin import ATP-binding/permease protein IrtA (irtA).